A 434-amino-acid polypeptide reads, in one-letter code: Maintenance of mitochondrial morphology protein 1 (434 aa).

Residues 1-105 (MEMSELLASE…SFSSQSFAEG (105 aa)) lie on the Lumenal side of the membrane. Residues 106–126 (LIVGQLSVIVALIFVIKFFVF) traverse the membrane as a helical segment. Residues 127–434 (SEGGTKTATA…DDSVSVKSND (308 aa)) are Cytoplasmic-facing. The 215-residue stretch at 194 to 408 (SPESLDWFNV…EPRFQFVKLP (215 aa)) folds into the SMP-LTD domain. Positions 415–434 (KNTRKEKTDTDDSVSVKSND) are disordered.

This sequence belongs to the MMM1 family. Homodimer. Component of the ER-mitochondria encounter structure (ERMES) or MDM complex, composed of MMM1, MDM10, MDM12 and MDM34. An MMM1 homodimer associates with one molecule of MDM12 on each side in a pairwise head-to-tail manner, and the SMP-LTD domains of MMM1 and MDM12 generate a continuous hydrophobic tunnel for phospholipid trafficking.

The protein resides in the endoplasmic reticulum membrane. Functionally, component of the ERMES/MDM complex, which serves as a molecular tether to connect the endoplasmic reticulum (ER) and mitochondria. Components of this complex are involved in the control of mitochondrial shape and protein biogenesis, and function in nonvesicular lipid trafficking between the ER and mitochondria. The MDM12-MMM1 subcomplex functions in the major beta-barrel assembly pathway that is responsible for biogenesis of all outer membrane beta-barrel proteins, and acts in a late step after the SAM complex. The MDM10-MDM12-MMM1 subcomplex further acts in the TOM40-specific pathway after the action of the MDM12-MMM1 complex. Essential for establishing and maintaining the structure of mitochondria and maintenance of mtDNA nucleoids. The sequence is that of Maintenance of mitochondrial morphology protein 1 from Kluyveromyces lactis (strain ATCC 8585 / CBS 2359 / DSM 70799 / NBRC 1267 / NRRL Y-1140 / WM37) (Yeast).